The chain runs to 196 residues: Early light-induced protein, chloroplastic (196 aa).

The N-terminal 48 residues, 1-48, are a transit peptide targeting the chloroplast; that stretch reads MAVSSCQSIMSNSMTNISSRSRVNQFTNIPSVYIPTLRRNVSLKVRSM. A compositionally biased stretch (basic and acidic residues) spans 47 to 57; it reads SMAEGEPKEQS. A disordered region spans residues 47–81; sequence SMAEGEPKEQSKVAVDPTTPTASTPTPQPAYTRPP. Transmembrane regions (helical) follow at residues 105-125, 132-152, and 176-196; these read LAMIGFVAAMGVEIAKGQGLS, GVAWFLGTSVLLSLASLIPFF, and IAMLGLVALAFTEFVKGTSLV.

This sequence belongs to the ELIP/psbS family.

It localises to the plastid. The protein resides in the chloroplast membrane. Probably involved in the integration of pigments into the mature pigment-protein complexes. This Pisum sativum (Garden pea) protein is Early light-induced protein, chloroplastic.